An 880-amino-acid chain; its full sequence is Guanine nucleotide-binding protein subunit beta 2 (880 aa).

The residue at position 24 (Ser-24) is a Phosphoserine. Kelch repeat units lie at residues Asn-291–Asn-339, His-377–Ile-425, and Thr-501–Ser-552. The segment at Phe-624–Asp-649 is disordered. Residues Ala-638–Ser-647 are compositionally biased toward low complexity. A Kelch 4 repeat occupies Thr-691–Ser-738.

In terms of assembly, g proteins are composed of 3 units, alpha, beta and gamma. GPB1 interacts with the alpha subunit GPA2.

The protein localises to the cytoplasm. It localises to the mitochondrion. Functionally, beta subunit of a guanine nucleotide-binding protein (G protein). G proteins are involved as modulators or transducers in various transmembrane signaling systems. The beta and gamma chains are required for the GTPase activity, for replacement of GDP by GTP, and for G protein-effector interaction. Involved in the determination of the cAMP level according to nutritional conditions, most probably as a regulator of cAMP phosphodiesterase. Required for the control of pseudohyphal and haploid invasive growth. This is Guanine nucleotide-binding protein subunit beta 2 (GPB2) from Saccharomyces cerevisiae (strain ATCC 204508 / S288c) (Baker's yeast).